Reading from the N-terminus, the 362-residue chain is Probable aromatic amino acid hydroxylase (362 aa).

2 residues coordinate Fe cation: His200 and His205.

The protein belongs to the biopterin-dependent aromatic amino acid hydroxylase family. Fe(2+) serves as cofactor.

This is Probable aromatic amino acid hydroxylase from Chlamydia pneumoniae (Chlamydophila pneumoniae).